Reading from the N-terminus, the 147-residue chain is Large ribosomal subunit protein uL11 (147 aa).

The protein belongs to the universal ribosomal protein uL11 family. Part of the ribosomal stalk of the 50S ribosomal subunit. Interacts with L10 and the large rRNA to form the base of the stalk. L10 forms an elongated spine to which L12 dimers bind in a sequential fashion forming a multimeric L10(L12)X complex. Post-translationally, one or more lysine residues are methylated.

Functionally, forms part of the ribosomal stalk which helps the ribosome interact with GTP-bound translation factors. In Phocaeicola vulgatus (strain ATCC 8482 / DSM 1447 / JCM 5826 / CCUG 4940 / NBRC 14291 / NCTC 11154) (Bacteroides vulgatus), this protein is Large ribosomal subunit protein uL11.